The chain runs to 147 residues: 3-dehydroquinate dehydratase (147 aa).

Catalysis depends on Tyr23, which acts as the Proton acceptor. Substrate-binding residues include Asn74, His80, and Asp87. The active-site Proton donor is His100. Residues Leu101–Ser102 and Arg111 each bind substrate.

It belongs to the type-II 3-dehydroquinase family. In terms of assembly, homododecamer.

The catalysed reaction is 3-dehydroquinate = 3-dehydroshikimate + H2O. It participates in metabolic intermediate biosynthesis; chorismate biosynthesis; chorismate from D-erythrose 4-phosphate and phosphoenolpyruvate: step 3/7. In terms of biological role, catalyzes a trans-dehydration via an enolate intermediate. The polypeptide is 3-dehydroquinate dehydratase (Clostridium botulinum (strain 657 / Type Ba4)).